Consider the following 61-residue polypeptide: Prophage outer membrane lipoprotein RzoR (61 aa).

An N-terminal signal peptide occupies residues 1–19 (MRKLKMMLCVMMLPLVVVG). The N-palmitoyl cysteine moiety is linked to residue Cys20. Residue Cys20 is the site of S-diacylglycerol cysteine attachment.

Belongs to the lambdalikevirus o-spanin family. As to quaternary structure, homodimer; disulfide-linked. Interacts (via C-terminus) with RZ (via C-terminus). Part of the spanin complex which spans the entire periplasmic space. The spanin complex is composed of spanin, inner membrane subunit and spanin, outer membrane subunit.

It is found in the cell outer membrane. In terms of biological role, component of the spanin complex that disrupts the outer membrane and causes cell lysis during virus exit. The spanin complex conducts the final step in cell lysis by disrupting the outer membrane after holin and endolysin action have permeabilized the inner membrane and degraded the host peptidoglycans. The chain is Prophage outer membrane lipoprotein RzoR (rzoR) from Escherichia coli (strain K12).